We begin with the raw amino-acid sequence, 435 residues long: Solute carrier family 38 member 8 (435 aa).

A run of 11 helical transmembrane segments spans residues 29–49 (AVFI…PWAF), 55–75 (VVPA…GLVI), 100–120 (IGKL…VAFL), 151–171 (FTLP…REIA), 178–198 (ILGT…YYLW), 218–240 (VFSV…SIYC), 250–270 (WALV…LTGV), 295–315 (IIVA…IVLF), 348–368 (MPLT…MPDL), 374–394 (IIGG…LICA), and 410–430 (VWGV…TAAA).

It belongs to the amino acid/polyamine transporter 2 family. In terms of tissue distribution, expressed in fetal and adult brain, and spinal cord. In the brain, it is localized in the cell body and axon of the majority of neuronal cells and in a subset of glial cells. Found throughout the neuronal retina, with higher expression levels in the inner and outer plexiform layers and the photoreceptor layer. Very weak expression is also present in the kidneys, thymus, and testes.

It localises to the membrane. The protein resides in the cytoplasm. Its subcellular location is the cell cortex. The protein localises to the cell projection. It is found in the axon. The enzyme catalyses L-glutamine(out) = L-glutamine(in). It carries out the reaction L-alanine(in) = L-alanine(out). It catalyses the reaction L-histidine(out) = L-histidine(in). The catalysed reaction is L-aspartate(out) = L-aspartate(in). The enzyme catalyses L-arginine(in) = L-arginine(out). It carries out the reaction L-leucine(in) = L-leucine(out). Its function is as follows. Electrogenic sodium-dependent amino acid transporter with a preference for L-glutamine, L-alanine, L-histidine, L-aspartate and L-arginine. May facilitate glutamine uptake in both excitatory and inhibitory neurons. The transport mechanism and stoichiometry remain to be elucidated. The chain is Solute carrier family 38 member 8 from Homo sapiens (Human).